A 206-amino-acid chain; its full sequence is Cytochrome b6-f complex iron-sulfur subunit, chloroplastic (206 aa).

The transit peptide at 1–29 (MAMLSSRRVAAPAKASAIRRSRVMPVVRA) directs the protein to the chloroplast. The chain crosses the membrane as a helical span at residues 39-68 (MNKRNIMNLILAGGAGLPITTLALGYGAFF). Residues 92 to 188 (AGEWLKTHLA…CDVAESGLVT (97 aa)) enclose the Rieske domain. Residues Cys-134, His-136, Cys-152, and His-155 each contribute to the [2Fe-2S] cluster site. Cys-139 and Cys-154 are disulfide-bonded.

It belongs to the Rieske iron-sulfur protein family. As to quaternary structure, the 4 large subunits of the cytochrome b6-f complex are cytochrome b6, subunit IV (17 kDa polypeptide, petD), cytochrome f and the Rieske protein, while the 4 small subunits are petG, petL, petM and petN. The complex functions as a dimer. It depends on [2Fe-2S] cluster as a cofactor.

Its subcellular location is the plastid. The protein resides in the chloroplast thylakoid membrane. The catalysed reaction is 2 oxidized [plastocyanin] + a plastoquinol + 2 H(+)(in) = 2 reduced [plastocyanin] + a plastoquinone + 4 H(+)(out). In terms of biological role, component of the cytochrome b6-f complex, which mediates electron transfer between photosystem II (PSII) and photosystem I (PSI), cyclic electron flow around PSI, and state transitions. In Chlamydomonas reinhardtii (Chlamydomonas smithii), this protein is Cytochrome b6-f complex iron-sulfur subunit, chloroplastic (petC).